The sequence spans 49 residues: Large ribosomal subunit protein bL33 (49 aa).

The protein belongs to the bacterial ribosomal protein bL33 family.

This Pseudothermotoga lettingae (strain ATCC BAA-301 / DSM 14385 / NBRC 107922 / TMO) (Thermotoga lettingae) protein is Large ribosomal subunit protein bL33.